The sequence spans 144 residues: Large ribosomal subunit protein uL15 (144 aa).

The tract at residues 1 to 53 (MRLNTLSPAEGAKHSAKRLGRGIGSGLGKTGGRGHKGQKSRTGGGVRRGFEGG) is disordered. The span at 21-31 (RGIGSGLGKTG) shows a compositional bias: gly residues.

Belongs to the universal ribosomal protein uL15 family. Part of the 50S ribosomal subunit.

Functionally, binds to the 23S rRNA. In Haemophilus influenzae (strain ATCC 51907 / DSM 11121 / KW20 / Rd), this protein is Large ribosomal subunit protein uL15.